The primary structure comprises 157 residues: Protein Smg homolog (157 aa).

Belongs to the Smg family.

This is Protein Smg homolog from Shewanella piezotolerans (strain WP3 / JCM 13877).